Consider the following 161-residue polypeptide: Phosphopantetheine adenylyltransferase (161 aa).

Substrate is bound at residue serine 9. ATP contacts are provided by residues 9-10 and histidine 17; that span reads SF. Substrate is bound by residues lysine 41, valine 73, and lysine 87. ATP-binding positions include 88 to 90, glutamate 98, and 122 to 128; these read GLR and YSFVSSS.

It belongs to the bacterial CoaD family. In terms of assembly, homohexamer. Requires Mg(2+) as cofactor.

It localises to the cytoplasm. It catalyses the reaction (R)-4'-phosphopantetheine + ATP + H(+) = 3'-dephospho-CoA + diphosphate. It functions in the pathway cofactor biosynthesis; coenzyme A biosynthesis; CoA from (R)-pantothenate: step 4/5. Its function is as follows. Reversibly transfers an adenylyl group from ATP to 4'-phosphopantetheine, yielding dephospho-CoA (dPCoA) and pyrophosphate. This Mycobacterium bovis (strain ATCC BAA-935 / AF2122/97) protein is Phosphopantetheine adenylyltransferase.